Reading from the N-terminus, the 720-residue chain is uncharacterized protein (720 aa).

G2 carries N-myristoyl glycine; by host lipidation.

This is an uncharacterized protein from Cryphonectria parasitica mycoreovirus 1 (strain 9B21) (CpMYRV-1).